Here is a 213-residue protein sequence, read N- to C-terminus: Chloramphenicol acetyltransferase 3 (213 aa).

The Proton acceptor role is filled by H189.

It belongs to the chloramphenicol acetyltransferase family. As to quaternary structure, homotrimer.

It catalyses the reaction chloramphenicol + acetyl-CoA = chloramphenicol 3-acetate + CoA. Functionally, this enzyme is an effector of chloramphenicol resistance in bacteria. The sequence is that of Chloramphenicol acetyltransferase 3 (cat3) from Escherichia coli.